The primary structure comprises 272 residues: Shikimate dehydrogenase (NADP(+)) (272 aa).

Residues 14–16 (SKS) and T61 each bind shikimate. K65 (proton acceptor) is an active-site residue. An NADP(+)-binding site is contributed by E77. N86 and D102 together coordinate shikimate. Residues 126–130 (GAGGA), 149–154 (NRTVSR), and M213 contribute to the NADP(+) site. Y215 contacts shikimate. Residue G237 participates in NADP(+) binding.

The protein belongs to the shikimate dehydrogenase family. As to quaternary structure, homodimer.

It catalyses the reaction shikimate + NADP(+) = 3-dehydroshikimate + NADPH + H(+). It participates in metabolic intermediate biosynthesis; chorismate biosynthesis; chorismate from D-erythrose 4-phosphate and phosphoenolpyruvate: step 4/7. Functionally, involved in the biosynthesis of the chorismate, which leads to the biosynthesis of aromatic amino acids. Catalyzes the reversible NADPH linked reduction of 3-dehydroshikimate (DHSA) to yield shikimate (SA). The protein is Shikimate dehydrogenase (NADP(+)) of Escherichia coli O6:H1 (strain CFT073 / ATCC 700928 / UPEC).